The primary structure comprises 359 residues: Biotin synthase (359 aa).

The interval 1–23 (MSVADSSAADSVAAPDTADTSSS) is disordered. Residues 76–302 (YFGNTVQLYF…VNPDRELRIA (227 aa)) form the Radical SAM core domain. Residues Cys94, Cys98, and Cys101 each coordinate [4Fe-4S] cluster. Residues Cys138, Cys170, Cys230, and Arg300 each coordinate [2Fe-2S] cluster.

It belongs to the radical SAM superfamily. Biotin synthase family. As to quaternary structure, homodimer. The cofactor is [4Fe-4S] cluster. Requires [2Fe-2S] cluster as cofactor.

The catalysed reaction is (4R,5S)-dethiobiotin + (sulfur carrier)-SH + 2 reduced [2Fe-2S]-[ferredoxin] + 2 S-adenosyl-L-methionine = (sulfur carrier)-H + biotin + 2 5'-deoxyadenosine + 2 L-methionine + 2 oxidized [2Fe-2S]-[ferredoxin]. Its pathway is cofactor biosynthesis; biotin biosynthesis; biotin from 7,8-diaminononanoate: step 2/2. Catalyzes the conversion of dethiobiotin (DTB) to biotin by the insertion of a sulfur atom into dethiobiotin via a radical-based mechanism. This Rhodopirellula baltica (strain DSM 10527 / NCIMB 13988 / SH1) protein is Biotin synthase.